Here is a 312-residue protein sequence, read N- to C-terminus: Aquaporin Lacbi1:391485 (312 aa).

Over 1–50 (MDDKFDDDALPNSKTTPEDYGDKLAEYDYTNTFPNTWMRLREPFREYIAE) the chain is Cytoplasmic. A helical transmembrane segment spans residues 51–71 (FVGVAVLIIFGVGADCQVVLS). Topologically, residues 72–89 (ANTGVAPSPKGDYLSLNC) are extracellular. Residues 90 to 110 (GWAIGTAMGVWISGGISGGHI) form a helical membrane-spanning segment. The short motif at 111-113 (NPA) is the NPA 1 element. Residues 111-128 (NPAVTLALMAWRGFPWWK) are Cytoplasmic-facing. The helical transmembrane segment at 129 to 149 (VPGFIFAQLLGGIVGAGLVYV) threads the bilayer. The Extracellular portion of the chain corresponds to 150 to 183 (NYIHAIDIVEGGRHIRTLDTAGLFATYAADYMTN). N-linked (GlcNAc...) asparagine glycosylation occurs at Asn-183. A helical membrane pass occupies residues 184–204 (VSCFFSEFLATAVLIVVIHAM). Residues 205–213 (NDKRNAPPP) lie on the Cytoplasmic side of the membrane. The chain crosses the membrane as a helical span at residues 214–234 (AGLAPLVLFFLILGIGASLGM). Residues 235-267 (ETGYAINPARDLGPRMLTAMVGYGRQVFAFRNQ) are Extracellular-facing. The NPA 2 motif lies at 241 to 243 (NPA). The helical transmembrane segment at 268–288 (YWIWCPVIAPFLGAQVGTIFY) threads the bilayer. Over 289-312 (DLFFYKGQDNVFGRLGSHIHISPA) the chain is Cytoplasmic.

The protein belongs to the MIP/aquaporin (TC 1.A.8) family.

It is found in the membrane. It catalyses the reaction H2O(in) = H2O(out). The catalysed reaction is glycerol(in) = glycerol(out). It carries out the reaction NH4(+)(in) = NH4(+)(out). Functionally, water channel required to facilitate the transport of water across membranes. In addition to water, also shows strong glycerol and ammonium transport activities. May be involved in fungal nitrogen (ammonium) support of the plant host in symbiosis. Glycerol accumulation has never been observed in ectomycorrhizal (ECM) fungi, therefore, glycerol permeability of Lacbi1:391485 might be a relict of the affiliation of the protein to the group of aquaglyceroporins, and other osmotic active compounds (e.g. trehalose or mannitol) may have taken over glycerol function in ECM fungi. The protein is Aquaporin Lacbi1:391485 of Laccaria bicolor (strain S238N-H82 / ATCC MYA-4686) (Bicoloured deceiver).